The following is a 170-amino-acid chain: Group 2 truncated hemoglobin 3-1 (170 aa).

Heme b is bound at residue histidine 98.

Belongs to the truncated hemoglobin family. Group II subfamily. As to quaternary structure, homodimer when ferric.

Its function is as follows. Hemoglobin-like protein that exhibits an unusual concentration-independent binding of O(2) and CO. Required for general plant development and during nodulation. May promote shoot organogenesis from root explants. This is Group 2 truncated hemoglobin 3-1 from Medicago truncatula (Barrel medic).